A 112-amino-acid polypeptide reads, in one-letter code: UPF0251 protein MA_4245 (112 aa).

It belongs to the UPF0251 family.

This Methanosarcina acetivorans (strain ATCC 35395 / DSM 2834 / JCM 12185 / C2A) protein is UPF0251 protein MA_4245.